Reading from the N-terminus, the 145-residue chain is Large ribosomal subunit protein uL15 (145 aa).

A disordered region spans residues 1–52 (MFNLLKPKGASKRRKIVGRGPGSGLGKTSGRGQKGQKARNTSPRLGFEGGQT). Over residues 19 to 33 (RGPGSGLGKTSGRGQ) the composition is skewed to gly residues.

The protein belongs to the universal ribosomal protein uL15 family. Part of the 50S ribosomal subunit.

In terms of biological role, binds to the 23S rRNA. This is Large ribosomal subunit protein uL15 from Borreliella burgdorferi (strain ATCC 35210 / DSM 4680 / CIP 102532 / B31) (Borrelia burgdorferi).